Reading from the N-terminus, the 382-residue chain is Beta-1,4-galactosyltransferase 6 (382 aa).

At 1–15 (MSALKRMMRVSNRSL) the chain is on the cytoplasmic side. A helical; Signal-anchor for type II membrane protein transmembrane segment spans residues 16–35 (IAFIFFFSLSTSCLYFIYVA). At 36-382 (PGIANTYLFM…MPELAPIEDY (347 aa)) the chain is on the lumenal side. N-linked (GlcNAc...) asparagine glycosylation is found at Asn71, Asn75, Asn83, Asn84, Asn99, and Asn122. Cys108 and Cys152 form a disulfide bridge. Residues 163-167 (PFRNR), 202-204 (FNR), 229-230 (VD), Tyr258, and Trp290 each bind UDP-alpha-D-galactose. A disulfide bridge links Cys223 with Cys242. Residue Asp230 participates in Mn(2+) binding. N-acetyl-D-glucosamine is bound at residue 292–295 (GEDD). N-linked (GlcNAc...) asparagine glycosylation is present at Asn307. Mn(2+) is bound at residue His323. UDP-alpha-D-galactose is bound at residue 323 to 324 (HH). N-acetyl-D-glucosamine is bound at residue Arg334. An N-linked (GlcNAc...) asparagine glycan is attached at Asn367.

This sequence belongs to the glycosyltransferase 7 family. The cofactor is Mn(2+). Mg(2+) is required as a cofactor. Ca(2+) serves as cofactor. As to expression, brain and kidney.

The protein resides in the golgi apparatus. It localises to the golgi stack membrane. It carries out the reaction a beta-D-glucosyl-(1&lt;-&gt;1')-N-acylsphing-4-enine + UDP-alpha-D-galactose = a beta-D-Gal-(1-&gt;4)-beta-D-Glc-(1&lt;-&gt;1)-Cer(d18:1(4E)) + UDP + H(+). It participates in protein modification; protein glycosylation. It functions in the pathway sphingolipid metabolism. With respect to regulation, inhibited by EDTA. Its function is as follows. Catalyzes the synthesis of lactosylceramide (LacCer) via the transfer of galactose from UDP-galactose to glucosylceramide (GlcCer). LacCer is the starting point in the biosynthesis of all gangliosides (membrane-bound glycosphingolipids) which play pivotal roles in the CNS including neuronal maturation and axonal and myelin formation. This Mus musculus (Mouse) protein is Beta-1,4-galactosyltransferase 6.